A 633-amino-acid polypeptide reads, in one-letter code: Phosphomethylpyrimidine synthase (633 aa).

Substrate contacts are provided by residues Asn-245, Met-274, Tyr-303, His-339, 359–361 (SRG), 400–403 (DGLR), and Glu-439. Position 443 (His-443) interacts with Zn(2+). Substrate is bound at residue Tyr-466. A Zn(2+)-binding site is contributed by His-507. [4Fe-4S] cluster is bound by residues Cys-587, Cys-590, and Cys-595.

This sequence belongs to the ThiC family. As to quaternary structure, homodimer. Requires [4Fe-4S] cluster as cofactor.

It catalyses the reaction 5-amino-1-(5-phospho-beta-D-ribosyl)imidazole + S-adenosyl-L-methionine = 4-amino-2-methyl-5-(phosphooxymethyl)pyrimidine + CO + 5'-deoxyadenosine + formate + L-methionine + 3 H(+). It participates in cofactor biosynthesis; thiamine diphosphate biosynthesis. Catalyzes the synthesis of the hydroxymethylpyrimidine phosphate (HMP-P) moiety of thiamine from aminoimidazole ribotide (AIR) in a radical S-adenosyl-L-methionine (SAM)-dependent reaction. The chain is Phosphomethylpyrimidine synthase from Neisseria meningitidis serogroup A / serotype 4A (strain DSM 15465 / Z2491).